A 319-amino-acid polypeptide reads, in one-letter code: Acetyl-coenzyme A carboxylase carboxyl transferase subunit alpha (319 aa).

Residues Asp-35–Asp-296 form the CoA carboxyltransferase C-terminal domain.

It belongs to the AccA family. In terms of assembly, acetyl-CoA carboxylase is a heterohexamer composed of biotin carboxyl carrier protein (AccB), biotin carboxylase (AccC) and two subunits each of ACCase subunit alpha (AccA) and ACCase subunit beta (AccD).

The protein resides in the cytoplasm. The enzyme catalyses N(6)-carboxybiotinyl-L-lysyl-[protein] + acetyl-CoA = N(6)-biotinyl-L-lysyl-[protein] + malonyl-CoA. It functions in the pathway lipid metabolism; malonyl-CoA biosynthesis; malonyl-CoA from acetyl-CoA: step 1/1. Its function is as follows. Component of the acetyl coenzyme A carboxylase (ACC) complex. First, biotin carboxylase catalyzes the carboxylation of biotin on its carrier protein (BCCP) and then the CO(2) group is transferred by the carboxyltransferase to acetyl-CoA to form malonyl-CoA. This is Acetyl-coenzyme A carboxylase carboxyl transferase subunit alpha from Vibrio cholerae serotype O1 (strain ATCC 39541 / Classical Ogawa 395 / O395).